The sequence spans 209 residues: Protein-L-isoaspartate O-methyltransferase (209 aa).

The active site involves S59.

The protein belongs to the methyltransferase superfamily. L-isoaspartyl/D-aspartyl protein methyltransferase family.

It is found in the cytoplasm. It catalyses the reaction [protein]-L-isoaspartate + S-adenosyl-L-methionine = [protein]-L-isoaspartate alpha-methyl ester + S-adenosyl-L-homocysteine. Functionally, catalyzes the methyl esterification of L-isoaspartyl residues in peptides and proteins that result from spontaneous decomposition of normal L-aspartyl and L-asparaginyl residues. It plays a role in the repair and/or degradation of damaged proteins. This chain is Protein-L-isoaspartate O-methyltransferase, found in Helicobacter pylori (strain G27).